The sequence spans 387 residues: Protein RecA (387 aa).

Residue 80 to 87 (GPESSGKT) coordinates ATP. The segment at 348 to 387 (LDDSEVAETEEETTASKTKAKAKKEEKXVETEEIELELQD) is disordered. Acidic residues-rich tracts occupy residues 349-360 (DDSEVAETEEET) and 378-387 (TEEIELELQD).

Belongs to the RecA family.

The protein resides in the cytoplasm. Functionally, can catalyze the hydrolysis of ATP in the presence of single-stranded DNA, the ATP-dependent uptake of single-stranded DNA by duplex DNA, and the ATP-dependent hybridization of homologous single-stranded DNAs. It interacts with LexA causing its activation and leading to its autocatalytic cleavage. The chain is Protein RecA from Lactococcus lactis subsp. cremoris (Streptococcus cremoris).